The following is a 280-amino-acid chain: uncharacterized protein (280 aa).

A run of 6 helical transmembrane segments spans residues 3-23, 52-72, 81-101, 123-143, 196-216, and 233-253; these read ILIT…GMYI, FGLF…GSIV, INGL…NLQI, NWLV…LILL, FADI…IIIG, and IFAC…LLHI.

The protein resides in the cell membrane. This is an uncharacterized protein from Rickettsia prowazekii (strain Madrid E).